The sequence spans 465 residues: Hexokinase type 1 (465 aa).

Residues 8–447 (EEDFPEVYKV…CGVGAAIMAG (440 aa)) form the Hexokinase domain. The segment at 65-197 (TGRERGQFLA…EISVDVMGII (133 aa)) is hexokinase small subdomain. Lys88 is a binding site for ATP. The segment at 139–165 (PLGIAFAFTLKKLALDVGILVSWTKEF) is glucose-binding. Residues 198–436 (NVGAGSLLAL…YNFEFVITQD (239 aa)) form a hexokinase large subdomain region.

The protein belongs to the hexokinase family.

It carries out the reaction a D-hexose + ATP = a D-hexose 6-phosphate + ADP + H(+). The enzyme catalyses D-mannose + ATP = D-mannose 6-phosphate + ADP + H(+). The catalysed reaction is D-fructose + ATP = D-fructose 6-phosphate + ADP + H(+). It catalyses the reaction D-glucose + ATP = D-glucose 6-phosphate + ADP + H(+). Its pathway is carbohydrate metabolism; hexose metabolism. It functions in the pathway carbohydrate degradation; glycolysis; D-glyceraldehyde 3-phosphate and glycerone phosphate from D-glucose: step 1/4. In terms of biological role, catalyzes the phosphorylation of various hexoses to hexose 6-phosphate. This chain is Hexokinase type 1 (Hex-t1), found in Drosophila melanogaster (Fruit fly).